The following is a 426-amino-acid chain: uncharacterized protein (426 aa).

His-277 contacts Zn(2+). Glu-278 is an active-site residue. Residues His-281 and Glu-357 each coordinate Zn(2+).

Belongs to the peptidase M48B family. The cofactor is Zn(2+).

This is an uncharacterized protein from Bacillus subtilis (strain 168).